A 257-amino-acid chain; its full sequence is Alcohol dehydrogenase 1 (257 aa).

9–33 (VFVGGLGFIGYEACKTLITRDLASL) is an NAD(+) binding site. Substrate is bound at residue serine 137. The Proton acceptor role is filled by tyrosine 150.

This sequence belongs to the short-chain dehydrogenases/reductases (SDR) family. As to quaternary structure, homodimer.

The catalysed reaction is a primary alcohol + NAD(+) = an aldehyde + NADH + H(+). It carries out the reaction a secondary alcohol + NAD(+) = a ketone + NADH + H(+). The chain is Alcohol dehydrogenase 1 (ADH1) from Ceratitis cosyra (Mango fruit fly).